The sequence spans 312 residues: Olfactory receptor 51B2 (312 aa).

Residues 1–23 (MWPNITAAPFLLTGFPGLEAAHH) are Extracellular-facing. N4 carries N-linked (GlcNAc...) asparagine glycosylation. A helical transmembrane segment spans residues 24-44 (WISIPFFAVYVCILLGNGMLL). Residues 45–52 (YLIKHDHS) lie on the Cytoplasmic side of the membrane. A helical membrane pass occupies residues 53–73 (LHEPMYYFLTMLAGTDLMVTL). Residues 74–97 (TTMPTVMGILWVNHREISSVGCFL) lie on the Extracellular side of the membrane. A disulfide bridge links C95 with C187. A helical transmembrane segment spans residues 98-118 (QAYFIHSLSVVESGSLLAMAY). The Cytoplasmic portion of the chain corresponds to 119 to 137 (DCFIAIRNPLRYASILTNT). The chain crosses the membrane as a helical span at residues 138–158 (RVIALGVGVFLRGFVSILPVI). Topologically, residues 159–194 (LRLFSFSYCKSHVITRAFCLHQEIMRLACADITFNR) are extracellular. A helical transmembrane segment spans residues 195 to 215 (LYPVILISLTIFLDCLIILFS). Residues 216–235 (YILILNTVIGIASGEERAKA) lie on the Cytoplasmic side of the membrane. The helical transmembrane segment at 236-256 (LNTCISHISCVLIFYVTVMGL) threads the bilayer. Over 257–271 (TFIYRFGKNVPEVVH) the chain is Extracellular. Residues 272–292 (IIMSYIYFLFPPLMNPVIYSI) traverse the membrane as a helical segment. Topologically, residues 293-312 (KTKQIQYGIIRLLSKHRFSS) are cytoplasmic.

It belongs to the G-protein coupled receptor 1 family. Ubiquitinated by the CRL2(FEM1A) and CRL2(FEM1C) complexes, which recognize the -Lys-Xaa-Xaa-Arg C-degron at the C-terminus, leading to its degradation.

The protein localises to the cell membrane. Functionally, odorant receptor. The chain is Olfactory receptor 51B2 (OR51B2) from Homo sapiens (Human).